The following is a 188-amino-acid chain: Large ribosomal subunit protein eL18B (188 aa).

Positions 153 to 188 (GKAPGTPHSRTKPYVLSKGRKFERARGRRASRGYKN) are disordered. Positions 178–188 (RGRRASRGYKN) are enriched in basic residues.

It belongs to the eukaryotic ribosomal protein eL18 family. As to quaternary structure, component of the large ribosomal subunit.

It is found in the cytoplasm. The protein localises to the cytosol. Its subcellular location is the rough endoplasmic reticulum. Component of the large ribosomal subunit. The ribosome is a large ribonucleoprotein complex responsible for the synthesis of proteins in the cell. The polypeptide is Large ribosomal subunit protein eL18B (rpl18-b) (Xenopus laevis (African clawed frog)).